Here is a 147-residue protein sequence, read N- to C-terminus: Hemoglobin subunit delta (147 aa).

The Globin domain maps to 3-147 (HLTPEEKTAV…VANALAHKYH (145 aa)). S51 carries the phosphoserine modification. Positions 64 and 93 each coordinate heme b.

This sequence belongs to the globin family. In terms of assembly, heterotetramer of two delta chains and two alpha chains. In terms of tissue distribution, red blood cells.

This chain is Hemoglobin subunit delta (HBD), found in Gorilla gorilla gorilla (Western lowland gorilla).